Consider the following 507-residue polypeptide: ATP synthase subunit alpha, chloroplastic (507 aa).

170–177 is an ATP binding site; sequence GDRQTGKT.

This sequence belongs to the ATPase alpha/beta chains family. In terms of assembly, F-type ATPases have 2 components, CF(1) - the catalytic core - and CF(0) - the membrane proton channel. CF(1) has five subunits: alpha(3), beta(3), gamma(1), delta(1), epsilon(1). CF(0) has four main subunits: a, b, b' and c.

The protein resides in the plastid. It is found in the chloroplast thylakoid membrane. It carries out the reaction ATP + H2O + 4 H(+)(in) = ADP + phosphate + 5 H(+)(out). Its function is as follows. Produces ATP from ADP in the presence of a proton gradient across the membrane. The alpha chain is a regulatory subunit. This is ATP synthase subunit alpha, chloroplastic from Chloranthus spicatus (Chulantree).